A 1025-amino-acid polypeptide reads, in one-letter code: Retrovirus-related Pol polyprotein from type-1 retrotransposable element R2 (1025 aa).

Residues 1 to 11 show a composition bias toward polar residues; the sequence is NQIKKSNTSTG. Positions 1-38 are disordered; the sequence is NQIKKSNTSTGARIPKAMTNPADNFAGGQWKPPGRRSA. The segment at 46–69 adopts a C2H2-type zinc-finger fold; the sequence is FVCEHCLRAFTTNTGRGLHIKRAH. The span at 146-158 shows a compositional bias: basic and acidic residues; that stretch reads NRARETELTRLET. The interval 146–172 is disordered; it reads NRARETELTRLETADEDPASQEQDNPN. The Reverse transcriptase domain occupies 358-635; it reads MIMYHGQCPR…DQWKYLGVVY (278 aa). The segment at 755–1025 is nucleic acid-binding endonuclease; it reads SLLGGDWVAE…YRTERRRTAN (271 aa).

It carries out the reaction DNA(n) + a 2'-deoxyribonucleoside 5'-triphosphate = DNA(n+1) + diphosphate. The sequence is that of Retrovirus-related Pol polyprotein from type-1 retrotransposable element R2 from Nasonia vitripennis (Parasitic wasp).